A 79-amino-acid polypeptide reads, in one-letter code: Large ribosomal subunit protein uL24 (79 aa).

It belongs to the universal ribosomal protein uL24 family. Part of the 50S ribosomal subunit.

Its function is as follows. One of two assembly initiator proteins, it binds directly to the 5'-end of the 23S rRNA, where it nucleates assembly of the 50S subunit. In terms of biological role, one of the proteins that surrounds the polypeptide exit tunnel on the outside of the subunit. The sequence is that of Large ribosomal subunit protein uL24 from Lactobacillus gasseri (strain ATCC 33323 / DSM 20243 / BCRC 14619 / CIP 102991 / JCM 1131 / KCTC 3163 / NCIMB 11718 / NCTC 13722 / AM63).